Consider the following 309-residue polypeptide: Porphobilinogen deaminase (309 aa).

Cys242 bears the S-(dipyrrolylmethanemethyl)cysteine mark.

The protein belongs to the HMBS family. Monomer. Dipyrromethane is required as a cofactor.

It carries out the reaction 4 porphobilinogen + H2O = hydroxymethylbilane + 4 NH4(+). Its pathway is porphyrin-containing compound metabolism; protoporphyrin-IX biosynthesis; coproporphyrinogen-III from 5-aminolevulinate: step 2/4. Tetrapolymerization of the monopyrrole PBG into the hydroxymethylbilane pre-uroporphyrinogen in several discrete steps. The chain is Porphobilinogen deaminase from Legionella pneumophila (strain Paris).